Here is a 498-residue protein sequence, read N- to C-terminus: Hyaluronan-mediated motility receptor (498 aa).

Positions 150–331 (EEMTSERNVF…ITDLQNQLRQ (182 aa)) are required for interaction with FAM83D. N-linked (GlcNAc...) asparagine glycosylation is found at Asn-262 and Asn-302. Hyaluronic acid-binding stretches follow at residues 420–430 (KQKIKHVVKLK) and 442–451 (KLRSQLAKRK). Asn-483 carries an N-linked (GlcNAc...) asparagine glycan. Thr-488 is modified (phosphothreonine).

As to quaternary structure, interacts with ANKRD26. Interacts with DYNLL1. Interacts with FAM83D/CHICA.

The protein resides in the cell surface. The protein localises to the cytoplasm. Its subcellular location is the cytoskeleton. It is found in the spindle. Functionally, receptor for hyaluronic acid (HA). Involved in cell motility. When hyaluronan binds to HMMR, the phosphorylation of a number of proteins, including the PTK2/FAK1 occurs. May also be involved in cellular transformation and metastasis formation, and in regulating extracellular-regulated kinase (ERK) activity. May act as a regulator of adipogenisis. The protein is Hyaluronan-mediated motility receptor (Hmmr) of Rattus norvegicus (Rat).